The primary structure comprises 103 residues: Pyrimidine/purine nucleoside phosphorylase (103 aa).

This sequence belongs to the nucleoside phosphorylase PpnP family.

It carries out the reaction a purine D-ribonucleoside + phosphate = a purine nucleobase + alpha-D-ribose 1-phosphate. The enzyme catalyses adenosine + phosphate = alpha-D-ribose 1-phosphate + adenine. The catalysed reaction is cytidine + phosphate = cytosine + alpha-D-ribose 1-phosphate. It catalyses the reaction guanosine + phosphate = alpha-D-ribose 1-phosphate + guanine. It carries out the reaction inosine + phosphate = alpha-D-ribose 1-phosphate + hypoxanthine. The enzyme catalyses thymidine + phosphate = 2-deoxy-alpha-D-ribose 1-phosphate + thymine. The catalysed reaction is uridine + phosphate = alpha-D-ribose 1-phosphate + uracil. It catalyses the reaction xanthosine + phosphate = alpha-D-ribose 1-phosphate + xanthine. Functionally, catalyzes the phosphorolysis of diverse nucleosides, yielding D-ribose 1-phosphate and the respective free bases. Can use uridine, adenosine, guanosine, cytidine, thymidine, inosine and xanthosine as substrates. Also catalyzes the reverse reactions. The chain is Pyrimidine/purine nucleoside phosphorylase from Laribacter hongkongensis (strain HLHK9).